A 125-amino-acid chain; its full sequence is Small ribosomal subunit protein mS41 (125 aa).

A mitochondrion-targeting transit peptide spans 1-23; sequence MLFRRLFSSSVIVQAASKTSLRK.

Belongs to the mitochondrion-specific ribosomal protein mS41 family.

Its subcellular location is the mitochondrion. Functionally, involved in telomere length regulation. This chain is Small ribosomal subunit protein mS41 (FYV4), found in Kluyveromyces lactis (strain ATCC 8585 / CBS 2359 / DSM 70799 / NBRC 1267 / NRRL Y-1140 / WM37) (Yeast).